The following is a 374-amino-acid chain: Quinolinate synthase (374 aa).

His-53 and Ser-70 together coordinate iminosuccinate. Residue Cys-116 coordinates [4Fe-4S] cluster. Residues Tyr-148–Asn-150 and Ser-169 contribute to the iminosuccinate site. Cys-236 provides a ligand contact to [4Fe-4S] cluster. Residues His-262–Glu-264 and Thr-279 each bind iminosuccinate. Cys-327 serves as a coordination point for [4Fe-4S] cluster.

It belongs to the quinolinate synthase family. Type 3 subfamily. [4Fe-4S] cluster serves as cofactor.

It is found in the cytoplasm. It catalyses the reaction iminosuccinate + dihydroxyacetone phosphate = quinolinate + phosphate + 2 H2O + H(+). It functions in the pathway cofactor biosynthesis; NAD(+) biosynthesis; quinolinate from iminoaspartate: step 1/1. Functionally, catalyzes the condensation of iminoaspartate with dihydroxyacetone phosphate to form quinolinate. The sequence is that of Quinolinate synthase from Haloarcula marismortui (strain ATCC 43049 / DSM 3752 / JCM 8966 / VKM B-1809) (Halobacterium marismortui).